A 107-amino-acid chain; its full sequence is Phosphoribosyl-ATP pyrophosphatase (107 aa).

The protein belongs to the PRA-PH family.

It is found in the cytoplasm. It catalyses the reaction 1-(5-phospho-beta-D-ribosyl)-ATP + H2O = 1-(5-phospho-beta-D-ribosyl)-5'-AMP + diphosphate + H(+). Its pathway is amino-acid biosynthesis; L-histidine biosynthesis; L-histidine from 5-phospho-alpha-D-ribose 1-diphosphate: step 2/9. In Sinorhizobium fredii (strain NBRC 101917 / NGR234), this protein is Phosphoribosyl-ATP pyrophosphatase.